The sequence spans 70 residues: Putative membrane protein insertion efficiency factor (70 aa).

Belongs to the UPF0161 family.

It is found in the cell membrane. Functionally, could be involved in insertion of integral membrane proteins into the membrane. The polypeptide is Putative membrane protein insertion efficiency factor (Moorella thermoacetica (strain ATCC 39073 / JCM 9320)).